A 692-amino-acid chain; its full sequence is NADH-ubiquinone oxidoreductase chain 5 (692 aa).

Helical transmembrane passes span 5 to 23 (IIILPLLGSIVSGFFGRKV), 30 to 52 (ILGCLSIITTTILAIISFFEVGF), 81 to 103 (LTVSMLIPVLVISSLVHFYSIGY), 112 to 129 (RFFSYLSLFTFMMIILVT), 133 to 155 (YLLMFVGWEGVGVCSYLLVSFWF), 168 to 190 (FLTNRVGDCFLTIGMFVILWSLG), 200 to 222 (LAPYINENIITIIGICLLIGAMA), 243 to 262 (VSALIHAATMVTAGVYLLIR), 272 to 294 (TVLLICLWLGAVTTVFSSLIGLF), 301 to 319 (IIAYSTMSQLGMMVIAIGL), 329 to 351 (LINHAFYKGLLFLGAGAVIHAVV), 364 to 386 (SFLPLTYTVILIASLSLVAFPFM), 409 to 431 (NVYFIATIGAVFTTLYSVKVIYL), 452 to 471 (IFLSLPLVILAIFSIYFGYL), 511 to 528 (LLPFFLTIFFSVLSIVYY), 535 to 557 (VVDFNLTNLGYYIYGFFNQRFLV), and 615 to 637 (YALYILIGACFYLSIFTFISIFF).

This sequence belongs to the complex I subunit 5 family.

Its subcellular location is the mitochondrion inner membrane. The enzyme catalyses a ubiquinone + NADH + 5 H(+)(in) = a ubiquinol + NAD(+) + 4 H(+)(out). Core subunit of the mitochondrial membrane respiratory chain NADH dehydrogenase (Complex I) that is believed to belong to the minimal assembly required for catalysis. Complex I functions in the transfer of electrons from NADH to the respiratory chain. The immediate electron acceptor for the enzyme is believed to be ubiquinone. The chain is NADH-ubiquinone oxidoreductase chain 5 (nd5) from Hypocrea jecorina (Trichoderma reesei).